The chain runs to 459 residues: Cysteine--tRNA ligase (459 aa).

Residue Cys27 coordinates Zn(2+). The 'HIGH' region signature appears at 29 to 39; sequence ITVYDDCHIGH. 3 residues coordinate Zn(2+): Cys208, His233, and Glu237. Residues 265 to 269 carry the 'KMSKS' region motif; it reads KMSKS. Position 268 (Lys268) interacts with ATP.

It belongs to the class-I aminoacyl-tRNA synthetase family. Monomer. Requires Zn(2+) as cofactor.

The protein resides in the cytoplasm. The enzyme catalyses tRNA(Cys) + L-cysteine + ATP = L-cysteinyl-tRNA(Cys) + AMP + diphosphate. This is Cysteine--tRNA ligase from Francisella philomiragia subsp. philomiragia (strain ATCC 25017 / CCUG 19701 / FSC 153 / O#319-036).